The chain runs to 315 residues: Pantothenate synthetase (315 aa).

An ATP-binding site is contributed by 45–52 (MGALHEGH). H52 serves as the catalytic Proton donor. Residue Q77 participates in (R)-pantoate binding. Q77 is a beta-alanine binding site. 163–166 (GEKD) serves as a coordination point for ATP. Q169 lines the (R)-pantoate pocket. ATP is bound by residues V192 and 200 to 203 (MSSR).

This sequence belongs to the pantothenate synthetase family. In terms of assembly, homodimer.

It localises to the cytoplasm. The enzyme catalyses (R)-pantoate + beta-alanine + ATP = (R)-pantothenate + AMP + diphosphate + H(+). It participates in cofactor biosynthesis; (R)-pantothenate biosynthesis; (R)-pantothenate from (R)-pantoate and beta-alanine: step 1/1. Its function is as follows. Catalyzes the condensation of pantoate with beta-alanine in an ATP-dependent reaction via a pantoyl-adenylate intermediate. The sequence is that of Pantothenate synthetase from Mycobacterium ulcerans (strain Agy99).